A 665-amino-acid chain; its full sequence is Ion-translocating oxidoreductase complex subunit C (665 aa).

4Fe-4S ferredoxin-type domains lie at 368 to 398 (EYAEPEAEQACIRCSSCSDACPVNLMPQQLY) and 408 to 437 (KSEEYALKDCIECGICAYVCPSHIPLIQYF). Residues Cys-378, Cys-381, Cys-384, Cys-388, Cys-417, Cys-420, Cys-423, and Cys-427 each coordinate [4Fe-4S] cluster. Basic and acidic residues-rich tracts occupy residues 465–477 (QARMEREEQERKA) and 485–513 (ARREELAQTKGEDPVKAALERLKAKKANE). Disordered regions lie at residues 465–568 (QARM…DAKK), 580–623 (AKKL…LDPK), and 637–665 (KKLAQANSTSEAISNSQTAENEVEKQIVR). Polar residues-rich tracts occupy residues 554–564 (VENQEQQTQPT) and 585–600 (QTNSTSEAISNSQTAE). The span at 602 to 615 (EVEKTKSAVEKTEE) shows a compositional bias: basic and acidic residues. The segment covering 643-656 (NSTSEAISNSQTAE) has biased composition (polar residues).

The protein belongs to the 4Fe4S bacterial-type ferredoxin family. RnfC subfamily. As to quaternary structure, the complex is composed of six subunits: RnfA, RnfB, RnfC, RnfD, RnfE and RnfG. It depends on [4Fe-4S] cluster as a cofactor.

The protein resides in the cell inner membrane. Functionally, part of a membrane-bound complex that couples electron transfer with translocation of ions across the membrane. This Haemophilus influenzae (strain 86-028NP) protein is Ion-translocating oxidoreductase complex subunit C.